The following is an 88-amino-acid chain: Small ribosomal subunit protein uS15 (88 aa).

Belongs to the universal ribosomal protein uS15 family. In terms of assembly, part of the 30S ribosomal subunit. Forms a bridge to the 50S subunit in the 70S ribosome, contacting the 23S rRNA.

Its function is as follows. One of the primary rRNA binding proteins, it binds directly to 16S rRNA where it helps nucleate assembly of the platform of the 30S subunit by binding and bridging several RNA helices of the 16S rRNA. Functionally, forms an intersubunit bridge (bridge B4) with the 23S rRNA of the 50S subunit in the ribosome. The polypeptide is Small ribosomal subunit protein uS15 (Geobacter sp. (strain M21)).